The sequence spans 326 residues: Protein LEG1 homolog (326 aa).

Positions 1 to 22 are cleaved as a signal peptide; sequence MKSNKTIFLILLFLINFNSIYS. Residues Asn58, Asn85, Asn165, Asn226, and Asn245 are each glycosylated (N-linked (GlcNAc...) asparagine).

The protein belongs to the LEG1 family.

It is found in the secreted. This Dictyostelium discoideum (Social amoeba) protein is Protein LEG1 homolog.